Here is a 186-residue protein sequence, read N- to C-terminus: Hydra actinoporin-like toxin 1 (186 aa).

Positions 1 to 18 are cleaved as a signal peptide; sequence MLLYICLVNLLLPLSVGA. The segment at 29–48 is N-terminal region; it reads KVGVDAALQQIDDVWKGKTV. The Cell attachment site, crucial for protein stability signature appears at 158–160; the sequence is RAG.

The protein belongs to the actinoporin family. HALT subfamily. In terms of assembly, octamer or nonamer in membranes. Monomer in the soluble state. In vitro, interacts with folate receptor alpha (of target organism). Expressed female germline during oogenesis.

Its subcellular location is the nematocyst. It localises to the secreted. The protein resides in the target cell membrane. In terms of biological role, pore-forming protein that forms hydrophilic pores and causes cytolysis. Compared to equinatoxin-2 (AC P61914), it reveals lower cytolysis activity (5-12-fold difference, tested on erythrocytes), a larger pore size (probably 2-3 nm) and different affinity to membrane lipids (100-fold lower affinity to sphingomyelin). Binds to sulfatides (SFT) as well as to the two sphingolipids, lysophosphatidic acid (LPA) and sphingosine-1-phosphate (S1P). It seems to bind more strongly to LPA than to S1P and SFT. Shows cytolytic activity on HeLa cells, with a different potency than its paralogs (from most potent to less potent: HALT-4&gt;HALT-6~HALT-1&gt;HALT-3&gt;HALT-7&gt;HALT-2). Pore formation is a multi-step process that involves specific recognition of membrane lipid by a protein aromatic residues rich region, firm binding to the membrane (mainly driven by hydrophobic interactions) accompanied by the transfer of the N-terminal region to the lipid-water interface and finally pore formation after oligomerization of monomers. In vitro, binds to the folate receptor alpha (FOLR1), a GPI-anchored membrane protein that plays a major role in the uptake of folate/folic acid into cells via endocytosis, suggesting a possible involvement of this receptor in the mechanism of HALT-1-induced cell lysis. In vivo, does not cause visible paralysis in larvae of the blowfly Sarcophaga faculata, the most common arthropod prey of Hydra. The protein is Hydra actinoporin-like toxin 1 of Hydra vulgaris (Hydra).